The chain runs to 170 residues: Adenine phosphoribosyltransferase (170 aa).

It belongs to the purine/pyrimidine phosphoribosyltransferase family. As to quaternary structure, homodimer.

Its subcellular location is the cytoplasm. The catalysed reaction is AMP + diphosphate = 5-phospho-alpha-D-ribose 1-diphosphate + adenine. Its pathway is purine metabolism; AMP biosynthesis via salvage pathway; AMP from adenine: step 1/1. Functionally, catalyzes a salvage reaction resulting in the formation of AMP, that is energically less costly than de novo synthesis. The polypeptide is Adenine phosphoribosyltransferase (Streptococcus pneumoniae (strain Hungary19A-6)).